We begin with the raw amino-acid sequence, 125 residues long: Glycine cleavage system H protein (125 aa).

The Lipoyl-binding domain occupies 19–101 (VGTVGISDYA…EGAAWFFKLT (83 aa)). At Lys60 the chain carries N6-lipoyllysine.

This sequence belongs to the GcvH family. As to quaternary structure, the glycine cleavage system is composed of four proteins: P, T, L and H. (R)-lipoate serves as cofactor.

Functionally, the glycine cleavage system catalyzes the degradation of glycine. The H protein shuttles the methylamine group of glycine from the P protein to the T protein. This chain is Glycine cleavage system H protein, found in Paramagnetospirillum magneticum (strain ATCC 700264 / AMB-1) (Magnetospirillum magneticum).